The following is a 455-amino-acid chain: Ribulose bisphosphate carboxylase large chain (455 aa).

N6,N6,N6-trimethyllysine is present on lysine 5. Positions 114 and 164 each coordinate substrate. Residue lysine 166 is the Proton acceptor of the active site. Lysine 168 contributes to the substrate binding site. Positions 192, 194, and 195 each coordinate Mg(2+). Lysine 192 bears the N6-carboxylysine mark. Histidine 285 functions as the Proton acceptor in the catalytic mechanism. Substrate contacts are provided by arginine 286, histidine 318, and serine 370.

The protein belongs to the RuBisCO large chain family. Type I subfamily. Heterohexadecamer of 8 large chains and 8 small chains; disulfide-linked. The disulfide link is formed within the large subunit homodimers. Requires Mg(2+) as cofactor. The disulfide bond which can form in the large chain dimeric partners within the hexadecamer appears to be associated with oxidative stress and protein turnover.

It is found in the plastid. Its subcellular location is the chloroplast. The enzyme catalyses 2 (2R)-3-phosphoglycerate + 2 H(+) = D-ribulose 1,5-bisphosphate + CO2 + H2O. The catalysed reaction is D-ribulose 1,5-bisphosphate + O2 = 2-phosphoglycolate + (2R)-3-phosphoglycerate + 2 H(+). Functionally, ruBisCO catalyzes two reactions: the carboxylation of D-ribulose 1,5-bisphosphate, the primary event in carbon dioxide fixation, as well as the oxidative fragmentation of the pentose substrate in the photorespiration process. Both reactions occur simultaneously and in competition at the same active site. This Lupinus cosentinii (West Australian blue lupine) protein is Ribulose bisphosphate carboxylase large chain.